The sequence spans 88 residues: Arminin 7965 (88 aa).

Residues 1–18 (MKTVFAILFLTFIAFTYA) form the signal peptide. Positions 19–57 (KSYEDVKEEIKNEVEREIFEDLEEESDVLDSNVRELNDA) are excised as a propeptide. Residue Ala85 is modified to Alanine amide.

It belongs to the arminin family. In terms of tissue distribution, expressed in entodermal epithelium along the body column.

The protein localises to the secreted. It is found in the target cell membrane. Its function is as follows. Antimicrobial peptide with a broad-spectrum antimicrobial activity. Keeps its antibacterial activity under a wide range of salt concentrations that mimic physiological conditions of human blood, which is surprising, since Hydra is an obligate freshwater animal with nearly no salt tolerance. Does not affect red blood cells. The chain is Arminin 7965 from Hydra vulgaris (Hydra).